The primary structure comprises 338 residues: Phenylalanine--tRNA ligase alpha subunit (338 aa).

E252 is a binding site for Mg(2+).

The protein belongs to the class-II aminoacyl-tRNA synthetase family. Phe-tRNA synthetase alpha subunit type 1 subfamily. Tetramer of two alpha and two beta subunits. The cofactor is Mg(2+).

Its subcellular location is the cytoplasm. It carries out the reaction tRNA(Phe) + L-phenylalanine + ATP = L-phenylalanyl-tRNA(Phe) + AMP + diphosphate + H(+). In Pseudomonas fluorescens (strain ATCC BAA-477 / NRRL B-23932 / Pf-5), this protein is Phenylalanine--tRNA ligase alpha subunit.